The primary structure comprises 340 residues: Ketol-acid reductoisomerase (NADP(+)) (340 aa).

Residues 3–182 (VTMYYEEDVE…GCARVGIIET (180 aa)) enclose the KARI N-terminal Rossmann domain. NADP(+)-binding positions include 26–29 (YGSQ), R49, S53, and 83–86 (DELQ). The active site involves H108. G134 is an NADP(+) binding site. In terms of domain architecture, KARI C-terminal knotted spans 183 to 328 (TFKEETEEDL…AELRKAMPFT (146 aa)). The Mg(2+) site is built by D191, E195, E227, and E231. Position 252 (S252) interacts with substrate.

Belongs to the ketol-acid reductoisomerase family. Mg(2+) is required as a cofactor.

The enzyme catalyses (2R)-2,3-dihydroxy-3-methylbutanoate + NADP(+) = (2S)-2-acetolactate + NADPH + H(+). The catalysed reaction is (2R,3R)-2,3-dihydroxy-3-methylpentanoate + NADP(+) = (S)-2-ethyl-2-hydroxy-3-oxobutanoate + NADPH + H(+). Its pathway is amino-acid biosynthesis; L-isoleucine biosynthesis; L-isoleucine from 2-oxobutanoate: step 2/4. The protein operates within amino-acid biosynthesis; L-valine biosynthesis; L-valine from pyruvate: step 2/4. Its function is as follows. Involved in the biosynthesis of branched-chain amino acids (BCAA). Catalyzes an alkyl-migration followed by a ketol-acid reduction of (S)-2-acetolactate (S2AL) to yield (R)-2,3-dihydroxy-isovalerate. In the isomerase reaction, S2AL is rearranged via a Mg-dependent methyl migration to produce 3-hydroxy-3-methyl-2-ketobutyrate (HMKB). In the reductase reaction, this 2-ketoacid undergoes a metal-dependent reduction by NADPH to yield (R)-2,3-dihydroxy-isovalerate. This is Ketol-acid reductoisomerase (NADP(+)) from Lactococcus lactis subsp. cremoris (strain SK11).